The chain runs to 541 residues: Glucose-6-phosphate isomerase (541 aa).

Catalysis depends on E346, which acts as the Proton donor. Catalysis depends on residues H377 and K506.

It belongs to the GPI family.

It localises to the cytoplasm. The enzyme catalyses alpha-D-glucose 6-phosphate = beta-D-fructose 6-phosphate. The protein operates within carbohydrate biosynthesis; gluconeogenesis. Its pathway is carbohydrate degradation; glycolysis; D-glyceraldehyde 3-phosphate and glycerone phosphate from D-glucose: step 2/4. Catalyzes the reversible isomerization of glucose-6-phosphate to fructose-6-phosphate. The polypeptide is Glucose-6-phosphate isomerase (Rhizobium rhizogenes (strain K84 / ATCC BAA-868) (Agrobacterium radiobacter)).